A 3135-amino-acid polypeptide reads, in one-letter code: Gametocyte surface protein P230 (3135 aa).

The N-terminal stretch at 1-20 is a signal peptide; it reads MKKIITLKNLFLIILVYIFS. N-linked (GlcNAc...) asparagine glycans are attached at residues Asn-76, Asn-111, Asn-135, and Asn-239. Residues 266 to 470 are disordered; the sequence is EEDMSPRDNF…EEKDEGGESF (205 aa). Acidic residues-rich tracts occupy residues 276-321 and 329-345; these read VIDD…EEQL and VGAE…DEDS. Over residues 346–358 the composition is skewed to basic and acidic residues; sequence VEARDGDMIRVDE. 2 stretches are compositionally biased toward acidic residues: residues 376-444 and 458-467; these read DVDE…EGEY and GDEEEKDEGG. Residue Asn-585 is glycosylated (N-linked (GlcNAc...) asparagine). 2 6-Cys domains span residues 589–730 and 733–887; these read KEYV…VEPY and KING…INEE. Cystine bridges form between Cys-593/Cys-611, Cys-626/Cys-706, Cys-737/Cys-781, and Cys-804/Cys-862. Asn-821, Asn-829, Asn-889, Asn-961, Asn-1079, Asn-1089, and Asn-1153 each carry an N-linked (GlcNAc...) asparagine glycan. 6-Cys domains lie at 918-1133, 1136-1275, 1285-1432, and 1435-1560; these read HDYT…ISKQ, KIKG…LKRE, KIYK…VSKR, and KVKG…YKKL. 3 disulfide bridges follow: Cys-1140–Cys-1161, Cys-1175–Cys-1251, and Cys-1200–Cys-1249. Asn-1267, Asn-1300, Asn-1452, Asn-1492, Asn-1508, Asn-1621, and Asn-1624 each carry an N-linked (GlcNAc...) asparagine glycan. 3 disulfides stabilise this stretch: Cys-1439/Cys-1459, Cys-1473/Cys-1534, and Cys-1483/Cys-1532. 4 consecutive 6-Cys domains span residues 1694–1907, 1910–2035, 2052–2199, and 2204–2374; these read NRHV…ISNS, KING…LNKD, NVHL…VRKN, and SFKL…SDNR. Disulfide bonds link Cys-1698–Cys-1726 and Cys-1740–Cys-1881. 6 N-linked (GlcNAc...) asparagine glycosylation sites follow: Asn-1753, Asn-1804, Asn-1882, Asn-1920, Asn-1954, and Asn-1972. Cystine bridges form between Cys-1914-Cys-1938, Cys-1952-Cys-2017, Cys-1963-Cys-2015, and Cys-2056-Cys-2074. N-linked (GlcNAc...) asparagine glycosylation is found at Asn-2178 and Asn-2199. Intrachain disulfides connect Cys-2208/Cys-2229, Cys-2243/Cys-2356, and Cys-2254/Cys-2354. 2 N-linked (GlcNAc...) asparagine glycosylation sites follow: Asn-2312 and Asn-2351. The tract at residues 2410 to 2432 is disordered; sequence IKQQQEEEQQEQILKDQDDRLSR. Basic and acidic residues predominate over residues 2422 to 2432; sequence ILKDQDDRLSR. N-linked (GlcNAc...) asparagine glycans are attached at residues Asn-2439, Asn-2457, Asn-2466, Asn-2504, Asn-2586, Asn-2611, Asn-2650, Asn-2677, and Asn-2688. 6-Cys domains are found at residues 2448–2663, 2666–2827, 2831–2979, and 2982–3113; these read NEHI…ISSN, IIHG…IDEK, GKDI…INQG, and EIHG…PEPQ. Intrachain disulfides connect Cys-2452–Cys-2476 and Cys-2490–Cys-2638. Intrachain disulfides connect Cys-2670–Cys-2706, Cys-2720–Cys-2804, and Cys-2730–Cys-2802. Asn-2952 carries N-linked (GlcNAc...) asparagine glycosylation. Cys-2986 and Cys-3010 are disulfide-bonded. Asn-3011, Asn-3016, Asn-3066, Asn-3093, and Asn-3096 each carry an N-linked (GlcNAc...) asparagine glycan. 2 disulfides stabilise this stretch: Cys-3024-Cys-3090 and Cys-3035-Cys-3088.

In terms of assembly, heterodimer; heterodimerizes with PF45/48. May be processed into a 310 kDa form as the parasite emerges from the host erythrocytes.

It localises to the cell surface. Its subcellular location is the cell membrane. Its function is as follows. Gametocyte surface protein required for male/female gamete fusion. Also required for male gamete exflagellation and interaction with host erythrocytes. This chain is Gametocyte surface protein P230 (PFS230), found in Plasmodium falciparum (isolate 3D7).